Reading from the N-terminus, the 413-residue chain is Monacolin J acid methylbutanoyltransferase (413 aa).

Arg73 lines the monacolin J pocket. Catalysis depends on Ser76, which acts as the Acyl-ester intermediate. Monacolin J is bound by residues Arg173, Tyr188, and Tyr258. Gly366 lines the 2-methylbutanoate pocket. The monacolin J site is built by Glu388 and Trp390.

The protein belongs to the class-A beta-lactamase family. In terms of assembly, interacts with LovF.

It carries out the reaction monacolin J carboxylate + (S)-2-methylbutanoyl-[2-methylbutanoate polyketide synthase] = lovastatin carboxylate + holo-[2-methylbutanoate polyketide synthase]. It functions in the pathway polyketide biosynthesis; lovastatin biosynthesis. Its function is as follows. Monacolin J acid methylbutanoyltransferase; part of the gene cluster that mediates the biosynthesis of lovastatin (also known as mevinolin, mevacor or monacolin K), a hypolipidemic inhibitor of (3S)-hydroxymethylglutaryl-coenzyme A (HMG-CoA) reductase (HMGR). The first step in the biosynthesis of lovastatin is the production of dihydromonacolin L acid by the lovastatin nonaketide synthase lovB and the trans-acting enoyl reductase lovC via condensation of one acetyl-CoA unit and 8 malonyl-CoA units. Dihydromonacolin L acid is released from lovB by the thioesterase lovG. Next, dihydromonacolin L acid is oxidized by the dihydromonacolin L monooxygenase lovA twice to form monacolin J acid. The 2-methylbutyrate moiety of lovastatin is synthesized by the lovastatin diketide synthase lovF via condensation of one acetyl-CoA unit and one malonyl-CoA unit. Finally, the covalent attachment of this moiety to monacolin J acid is catalyzed by the transesterase lovD to yield lovastatin. LovD has broad substrate specificity and can also convert monacolin J to simvastatin using alpha-dimethylbutanoyl-S-methyl-3-mercaptopropionate (DMB-S-MMP) as the thioester acyl donor, and can also catalyze the reverse reaction and function as hydrolase in vitro. LovD has much higher activity with LovF-bound 2-methylbutanoate than with free diketide substrates. This Aspergillus terreus protein is Monacolin J acid methylbutanoyltransferase.